The primary structure comprises 627 residues: tRNA uridine 5-carboxymethylaminomethyl modification enzyme MnmG (627 aa).

FAD contacts are provided by residues 13 to 18 (GGGHAG), valine 125, and serine 180. 274–288 (GPRYCPSIEDKVVRF) is an NAD(+) binding site. Glutamine 371 lines the FAD pocket.

It belongs to the MnmG family. In terms of assembly, homodimer. Heterotetramer of two MnmE and two MnmG subunits. FAD is required as a cofactor.

The protein localises to the cytoplasm. Its function is as follows. NAD-binding protein involved in the addition of a carboxymethylaminomethyl (cmnm) group at the wobble position (U34) of certain tRNAs, forming tRNA-cmnm(5)s(2)U34. The sequence is that of tRNA uridine 5-carboxymethylaminomethyl modification enzyme MnmG from Francisella philomiragia subsp. philomiragia (strain ATCC 25017 / CCUG 19701 / FSC 153 / O#319-036).